A 734-amino-acid polypeptide reads, in one-letter code: NAD(P)H-quinone oxidoreductase subunit 5, chloroplastic (734 aa).

The next 16 membrane-spanning stretches (helical) occupy residues 9–29 (WVIP…LFLV), 39–59 (IWAF…VHLS), 89–109 (IDPL…LVLI), 125–145 (FVYI…SNLI), 147–167 (IYFF…FWFT), 185–205 (GDFG…SLEF), 224–244 (LLTI…SAQF), 258–278 (TPIS…FLIA), 280–300 (LLPL…IGTL), 327–347 (LGYM…FHLI), 354–374 (ALLF…VGYS), 396–416 (TCFL…CFWS), 425–445 (WLYS…TAFY), 542–562 (LFPL…GIHF), 605–625 (SLAI…YSFF), and 714–734 (ISSY…FFLS).

This sequence belongs to the complex I subunit 5 family. In terms of assembly, NDH is composed of at least 16 different subunits, 5 of which are encoded in the nucleus.

The protein localises to the plastid. Its subcellular location is the chloroplast thylakoid membrane. The catalysed reaction is a plastoquinone + NADH + (n+1) H(+)(in) = a plastoquinol + NAD(+) + n H(+)(out). The enzyme catalyses a plastoquinone + NADPH + (n+1) H(+)(in) = a plastoquinol + NADP(+) + n H(+)(out). Its function is as follows. NDH shuttles electrons from NAD(P)H:plastoquinone, via FMN and iron-sulfur (Fe-S) centers, to quinones in the photosynthetic chain and possibly in a chloroplast respiratory chain. The immediate electron acceptor for the enzyme in this species is believed to be plastoquinone. Couples the redox reaction to proton translocation, and thus conserves the redox energy in a proton gradient. This Oryza nivara (Indian wild rice) protein is NAD(P)H-quinone oxidoreductase subunit 5, chloroplastic (ndhF).